Consider the following 139-residue polypeptide: Plastocyanin (139 aa).

The first 34 residues, Met-1 to Ala-34, serve as a signal peptide directing secretion. A Plastocyanin-like domain is found at Glu-35 to Ile-135. Cu cation contacts are provided by His-73, Cys-123, His-126, and Met-131.

Belongs to the plastocyanin family. The cofactor is Cu(2+).

The protein resides in the cellular thylakoid membrane. Its function is as follows. Participates in electron transfer between P700 and the cytochrome b6-f complex in photosystem I. The polypeptide is Plastocyanin (petE) (Trichormus variabilis (strain ATCC 29413 / PCC 7937) (Anabaena variabilis)).